The sequence spans 220 residues: Polyadenylate-binding protein 2 (220 aa).

A disordered region spans residues 1–24; that stretch reads MEEEEHEVYGGEIPDVGEMDGDME. The stretch at 34 to 74 forms a coiled coil; the sequence is AADDDAVKELDEMKKRLKEMEDEAAALREMQAKVEKEMGAQ. The tract at residues 78-219 is necessary for homooligomerization; it reads SIAANQAGKE…FRRPMRYMPY (142 aa). The 77-residue stretch at 92-168 folds into the RRM domain; it reads RSVFVGNVDY…RQLKVLQKRT (77 aa). Positions 165–172 match the Nuclear localization signal motif; sequence QKRTNVPG.

Monomer and homooligomer. Binds RNA as a monomer and oligomerizes when bound to poly(A). Forms a complex with cleavage and polyadenylation specificity factor (CPSF) subunits PAPS2, FIPS5, PABN3 and PABN1. Interacts with CSP3.

Its subcellular location is the nucleus speckle. The protein resides in the cytoplasm. Functionally, involved in the 3'-end formation of mRNA precursors (pre-mRNA) by the addition of a poly(A) tail of 200-250 nt to the upstream cleavage product. Stimulates poly(A) polymerase (PAPOLA) conferring processivity on the poly(A) tail elongation reaction and also controls the poly(A) tail length. Increases the affinity of poly(A) polymerase for RNA. Binds to poly(A) and to poly(G) with high affinity. May protect the poly(A) tail from degradation. The chain is Polyadenylate-binding protein 2 from Arabidopsis thaliana (Mouse-ear cress).